A 155-amino-acid polypeptide reads, in one-letter code: Ribosomal RNA large subunit methyltransferase H (155 aa).

S-adenosyl-L-methionine is bound by residues Leu-72, Gly-103, and Leu-122–Leu-127.

This sequence belongs to the RNA methyltransferase RlmH family. Homodimer.

It is found in the cytoplasm. The enzyme catalyses pseudouridine(1915) in 23S rRNA + S-adenosyl-L-methionine = N(3)-methylpseudouridine(1915) in 23S rRNA + S-adenosyl-L-homocysteine + H(+). Its function is as follows. Specifically methylates the pseudouridine at position 1915 (m3Psi1915) in 23S rRNA. This is Ribosomal RNA large subunit methyltransferase H from Histophilus somni (strain 129Pt) (Haemophilus somnus).